Reading from the N-terminus, the 258-residue chain is Phosphate import ATP-binding protein PstB (258 aa).

The ABC transporter domain maps to 5-247 (IDVSGLNAYY…ERIFSNPSVQ (243 aa)). 37-44 (GPSGCGKS) lines the ATP pocket.

It belongs to the ABC transporter superfamily. Phosphate importer (TC 3.A.1.7) family. In terms of assembly, the complex is composed of two ATP-binding proteins (PstB), two transmembrane proteins (PstC and PstA) and a solute-binding protein (PstS).

It localises to the cell membrane. The enzyme catalyses phosphate(out) + ATP + H2O = ADP + 2 phosphate(in) + H(+). Functionally, part of the ABC transporter complex PstSACB involved in phosphate import. Responsible for energy coupling to the transport system. This is Phosphate import ATP-binding protein PstB from Streptomyces coelicolor (strain ATCC BAA-471 / A3(2) / M145).